The sequence spans 174 residues: Chorismate pyruvate-lyase (174 aa).

4 residues coordinate substrate: Met36, Arg78, Leu116, and Glu157.

It belongs to the UbiC family. Monomer.

The protein localises to the cytoplasm. It catalyses the reaction chorismate = 4-hydroxybenzoate + pyruvate. Its pathway is cofactor biosynthesis; ubiquinone biosynthesis. Functionally, removes the pyruvyl group from chorismate, with concomitant aromatization of the ring, to provide 4-hydroxybenzoate (4HB) for the ubiquinone pathway. The chain is Chorismate pyruvate-lyase from Serratia proteamaculans (strain 568).